We begin with the raw amino-acid sequence, 157 residues long: Endoribonuclease YbeY (157 aa).

Residues His114, His118, and His124 each coordinate Zn(2+).

It belongs to the endoribonuclease YbeY family. Zn(2+) is required as a cofactor.

Its subcellular location is the cytoplasm. In terms of biological role, single strand-specific metallo-endoribonuclease involved in late-stage 70S ribosome quality control and in maturation of the 3' terminus of the 16S rRNA. This chain is Endoribonuclease YbeY, found in Salmonella paratyphi A (strain AKU_12601).